Reading from the N-terminus, the 425-residue chain is Multifunctional CCA protein (425 aa).

The ATP site is built by Gly8 and Arg11. 2 residues coordinate CTP: Gly8 and Arg11. Mg(2+) contacts are provided by Glu21 and Asp23. The ATP site is built by Arg91, Arg137, and Arg140. 3 residues coordinate CTP: Arg91, Arg137, and Arg140. The HD domain occupies 228–329 (TGVHTLMVLD…VDLLDRLGAL (102 aa)).

It belongs to the tRNA nucleotidyltransferase/poly(A) polymerase family. Bacterial CCA-adding enzyme type 1 subfamily. As to quaternary structure, monomer. Can also form homodimers and oligomers. Mg(2+) is required as a cofactor. The cofactor is Ni(2+).

The enzyme catalyses a tRNA precursor + 2 CTP + ATP = a tRNA with a 3' CCA end + 3 diphosphate. It catalyses the reaction a tRNA with a 3' CCA end + 2 CTP + ATP = a tRNA with a 3' CCACCA end + 3 diphosphate. Its function is as follows. Catalyzes the addition and repair of the essential 3'-terminal CCA sequence in tRNAs without using a nucleic acid template. Adds these three nucleotides in the order of C, C, and A to the tRNA nucleotide-73, using CTP and ATP as substrates and producing inorganic pyrophosphate. tRNA 3'-terminal CCA addition is required both for tRNA processing and repair. Also involved in tRNA surveillance by mediating tandem CCA addition to generate a CCACCA at the 3' terminus of unstable tRNAs. While stable tRNAs receive only 3'-terminal CCA, unstable tRNAs are marked with CCACCA and rapidly degraded. The polypeptide is Multifunctional CCA protein (Methylococcus capsulatus (strain ATCC 33009 / NCIMB 11132 / Bath)).